The sequence spans 101 residues: ATP synthase subunit c (101 aa).

Helical transmembrane passes span 31–51 (AFAY…GAGQ) and 81–101 (AISE…IFVG).

It belongs to the ATPase C chain family. F-type ATPases have 2 components, F(1) - the catalytic core - and F(0) - the membrane proton channel. F(1) has five subunits: alpha(3), beta(3), gamma(1), delta(1), epsilon(1). F(0) has three main subunits: a(1), b(2) and c(10-14). The alpha and beta chains form an alternating ring which encloses part of the gamma chain. F(1) is attached to F(0) by a central stalk formed by the gamma and epsilon chains, while a peripheral stalk is formed by the delta and b chains.

Its subcellular location is the cell membrane. Functionally, f(1)F(0) ATP synthase produces ATP from ADP in the presence of a proton or sodium gradient. F-type ATPases consist of two structural domains, F(1) containing the extramembraneous catalytic core and F(0) containing the membrane proton channel, linked together by a central stalk and a peripheral stalk. During catalysis, ATP synthesis in the catalytic domain of F(1) is coupled via a rotary mechanism of the central stalk subunits to proton translocation. In terms of biological role, key component of the F(0) channel; it plays a direct role in translocation across the membrane. A homomeric c-ring of between 10-14 subunits forms the central stalk rotor element with the F(1) delta and epsilon subunits. The protein is ATP synthase subunit c of Mesomycoplasma hyopneumoniae (strain J / ATCC 25934 / NCTC 10110) (Mycoplasma hyopneumoniae).